Here is a 135-residue protein sequence, read N- to C-terminus: VHWTAEEKALVNVVWSKTDHQAVVANALGRLFVVYPWTKTYFTKFNGKAGDSAVQTHAGKVVSALTLAYNHIDDVKPHFKHYEGFHVDPENFRLLANCLNVELGHTLHKEFTPELHAAWNKFSNVVVDALSKGYH.

The Globin domain occupies 2-135 (HWTAEEKALV…VVDALSKGYH (134 aa)). The heme b site is built by histidine 57 and histidine 81.

It belongs to the globin family. Hb 2 is a heterotetramer of two alpha and two beta-2 chains. As to expression, red blood cells (at protein level).

Involved in oxygen transport from gills to the various peripheral tissues. This Somniosus microcephalus (Greenland sleeper shark) protein is Hemoglobin subunit beta-2.